The chain runs to 689 residues: Protein asunder (689 aa).

Positions 521–550 (NGARLKLSKAKDQYRLLYRELEQLIQLNAT) form a coiled coil. Disordered regions lie at residues 592 to 619 (PERL…SKRR) and 665 to 689 (GTKD…SVRS). Low complexity predominate over residues 599–614 (SSVGASGSSSSNSLLK). Positions 613–619 (LKASKRR) match the Nuclear localization signal (NLS) motif.

Belongs to the Integrator subunit 13 family. As to quaternary structure, belongs to the multiprotein complex Integrator, at least composed of IntS1, IntS2, IntS3, IntS4, omd/IntS5, IntS6, defl/IntS7, IntS8, IntS9, IntS10, IntS11, IntS12, asun/IntS13, IntS14 and IntS15. The core complex associates with protein phosphatase 2A subunits mts/PP2A and Pp2A-29B, to form the Integrator-PP2A (INTAC) complex. Post-translationally, phosphorylated. In terms of tissue distribution, expressed in nurse cells at stages 9-10 of oogenesis and exported to the oocyte. Also expressed in the follicle cells surrounding the oocyte.

The protein localises to the nucleus. Its subcellular location is the cytoplasm. It localises to the perinuclear region. Component of the integrator complex, a multiprotein complex that terminates RNA polymerase II (Pol II) transcription in the promoter-proximal region of genes. The integrator complex provides a quality checkpoint during transcription elongation by driving premature transcription termination of transcripts that are unfavorably configured for transcriptional elongation: the complex terminates transcription by (1) catalyzing dephosphorylation of the C-terminal domain (CTD) of Pol II subunit Polr2A/Rbp1 and Spt5, and (2) degrading the exiting nascent RNA transcript via endonuclease activity. The integrator complex is also involved in the 3'-end processing of the U7 snRNA, and also the spliceosomal snRNAs U1, U2, U4 and U5. Plays a role as a regulator of spermatogenesis. Crucial regulator of the mitotic cell cycle and development. Required for the correct dynein-dynactin perinuclear localization important for nucleus-centrosome coupling that occur upon meiotic progression of primary spermatocytes. Plays a role in sperm motility and fertility. May have a role in the PNG/PLU/GNU pathway. This Drosophila melanogaster (Fruit fly) protein is Protein asunder.